A 624-amino-acid chain; its full sequence is uncharacterized protein (624 aa).

Residues 108-138 form a disordered region; sequence PTAWSGMESDSTASERSLPQRTDTTSVSSQY. Ser112 is subject to Phosphoserine. Polar residues predominate over residues 115-138; the sequence is ESDSTASERSLPQRTDTTSVSSQY. Ser205 is subject to Phosphoserine. 2 disordered regions span residues 217–236 and 305–329; these read LMESSGEKERNGNQELPGTR and KRECIKLASSPSRMETESSEEPVSE.

This is an uncharacterized protein from Rattus norvegicus (Rat).